Reading from the N-terminus, the 499-residue chain is Maturase K (499 aa).

It belongs to the intron maturase 2 family. MatK subfamily.

It localises to the plastid. Its subcellular location is the chloroplast. Functionally, usually encoded in the trnK tRNA gene intron. Probably assists in splicing its own and other chloroplast group II introns. The polypeptide is Maturase K (Neltuma juliflora (Mesquite)).